A 207-amino-acid chain; its full sequence is Ribosomal RNA large subunit methyltransferase E (207 aa).

S-adenosyl-L-methionine is bound by residues Gly-60, Trp-62, Asp-80, Asp-96, and Asp-121. Lys-161 functions as the Proton acceptor in the catalytic mechanism.

Belongs to the class I-like SAM-binding methyltransferase superfamily. RNA methyltransferase RlmE family.

It is found in the cytoplasm. It catalyses the reaction uridine(2552) in 23S rRNA + S-adenosyl-L-methionine = 2'-O-methyluridine(2552) in 23S rRNA + S-adenosyl-L-homocysteine + H(+). Functionally, specifically methylates the uridine in position 2552 of 23S rRNA at the 2'-O position of the ribose in the fully assembled 50S ribosomal subunit. This Azotobacter vinelandii (strain DJ / ATCC BAA-1303) protein is Ribosomal RNA large subunit methyltransferase E.